Consider the following 482-residue polypeptide: Cis-aconitate decarboxylase-like protein oryM (482 aa).

The protein belongs to the PrpD family.

The protein operates within secondary metabolite biosynthesis. Functionally, cis-aconitate decarboxylase-like protein; part of the gene cluster that mediates the biosynthesis of oryzines, natural products with an unusual maleidride backbone. The two subunits of the fungal fatty acid synthase oryfasA and oryfasB probably form octenoic acid. This fatty acid is most likely activated by the acyl-CoA ligase oryP to give octenyl-CoA before the citrate synthase-like protein oryE catalyzes condensation with oxaloacetate to form tricarboxylic acid. The next steps of the pathways are conjectural, but a favorite possible route has been proposed, beginning with decarboxylation and concomitant dehydration by the decarboxylase oryM, followed by tautomerization, which may lead to the production of a diene intermediate. Reduction of this diene intermediate could give the known metabolite piliformic acid. On the pathway to oryzine B and oryzine A, however, hydroxylation of the diene by the alpha-ketoglutarate-dependent dioxygenase oryG and lactonisation by the lactonohydrolases oryH or oryL could give oryzine B directly. Finally, enoyl reduction by the dehydrogenase oryD would then convert oryzine B into oryzine A. This chain is Cis-aconitate decarboxylase-like protein oryM, found in Aspergillus oryzae (strain ATCC 42149 / RIB 40) (Yellow koji mold).